Here is a 444-residue protein sequence, read N- to C-terminus: 23S rRNA (uracil(1939)-C(5))-methyltransferase RlmD (444 aa).

Residues 5 to 67 form the TRAM domain; the sequence is RNRFDRTPFQ…RHFDEAKTVE (63 aa). The [4Fe-4S] cluster site is built by C80, C86, C89, and C168. Residues Q276, F305, N310, E326, D353, and D374 each contribute to the S-adenosyl-L-methionine site. C400 functions as the Nucleophile in the catalytic mechanism.

The protein belongs to the class I-like SAM-binding methyltransferase superfamily. RNA M5U methyltransferase family. RlmD subfamily.

It carries out the reaction uridine(1939) in 23S rRNA + S-adenosyl-L-methionine = 5-methyluridine(1939) in 23S rRNA + S-adenosyl-L-homocysteine + H(+). In terms of biological role, catalyzes the formation of 5-methyl-uridine at position 1939 (m5U1939) in 23S rRNA. The sequence is that of 23S rRNA (uracil(1939)-C(5))-methyltransferase RlmD from Xanthomonas campestris pv. campestris (strain 8004).